Consider the following 174-residue polypeptide: Mytilin-3 (174 aa).

The signal sequence occupies residues 1–16 (MLKGIILIVTIQLVNA).

As to expression, component of the organic matrix of calcified shell layers like nacre and prisms.

The protein resides in the secreted. The chain is Mytilin-3 from Mytilus californianus (California mussel).